The primary structure comprises 989 residues: SWI/SNF-related matrix-associated actin-dependent regulator of chromatin subfamily A containing DEAD/H box 1 homolog (989 aa).

The interval 1–288 (MSTTSDFQTG…RRAKRGETKN (288 aa)) is disordered. A compositionally biased stretch (acidic residues) spans 72–105 (DDDDEDYVDETMPSEDEEDFDNNEEDEDDDDYEE). Residues 109-120 (RKRKAPSKKKLV) are compositionally biased toward basic residues. A compositionally biased stretch (basic and acidic residues) spans 124-140 (ENYRREDSETPEPEMKR). The span at 187–200 (DDESEDDFINDEEI) shows a compositional bias: acidic residues. Basic and acidic residues-rich tracts occupy residues 201 to 221 (SEKGSGKGSEKEESEGSGKDS) and 241 to 250 (AQKEQKKKAE). The segment covering 251–276 (SDEDWEEDEDDMNADGDETPSDDSDI) has biased composition (acidic residues). A compositionally biased stretch (basic and acidic residues) spans 277–288 (EERRAKRGETKN). The region spanning 406–574 (IMMYNKDLNA…ISLMYFVLSK (169 aa)) is the Helicase ATP-binding domain. ATP is bound at residue 419–426 (DEMGLGKT). The DEGH box signature appears at 525–528 (DEGH). The region spanning 757 to 912 (QLDVMLPEIQ…GVKGQLDEDA (156 aa)) is the Helicase C-terminal domain. The disordered stretch occupies residues 941–989 (RYDDVEDDSGDSKNGIDAEEAAKKEDEAVKEPVEKEQQKEEESQPSTSA). The span at 950–982 (GDSKNGIDAEEAAKKEDEAVKEPVEKEQQKEEE) shows a compositional bias: basic and acidic residues.

It belongs to the SNF2/RAD54 helicase family.

The protein resides in the nucleus. It is found in the chromosome. It catalyses the reaction ATP + H2O = ADP + phosphate + H(+). DNA helicase that possesses intrinsic ATP-dependent nucleosome-remodeling activity and is both required for DNA repair and heterochromatin organization. Promotes DNA end resection of double-strand breaks (DSBs) following DNA damage: probably acts by weakening histone DNA interactions in nucleosomes flanking DSBs. This chain is SWI/SNF-related matrix-associated actin-dependent regulator of chromatin subfamily A containing DEAD/H box 1 homolog, found in Caenorhabditis elegans.